A 361-amino-acid chain; its full sequence is Peptide chain release factor 1 (361 aa).

Gln238 carries the post-translational modification N5-methylglutamine.

This sequence belongs to the prokaryotic/mitochondrial release factor family. Methylated by PrmC. Methylation increases the termination efficiency of RF1.

It is found in the cytoplasm. In terms of biological role, peptide chain release factor 1 directs the termination of translation in response to the peptide chain termination codons UAG and UAA. This is Peptide chain release factor 1 from Mesomycoplasma hyopneumoniae (strain J / ATCC 25934 / NCTC 10110) (Mycoplasma hyopneumoniae).